The primary structure comprises 175 residues: MLHNDDVIAYPTESMFGLGCDPNSKKAVKKLLNLKNRSIEKGLILVASDFDQIKMYVNENILSNKQKKKIFFHWPGPFTFLLPAKPNTPYWLTGKFNTVAVRVSAHFEIIKLCNAFGQAVVSTSANISNMTPCFTSEEVFKCFGKDFPLLNGKIGNEKNPSKIINIINGKLIRYV.

Residues 1–175 form the YrdC-like domain; the sequence is MLHNDDVIAY…IINGKLIRYV (175 aa).

This sequence belongs to the SUA5 family. TsaC subfamily.

The protein localises to the cytoplasm. The catalysed reaction is L-threonine + hydrogencarbonate + ATP = L-threonylcarbamoyladenylate + diphosphate + H2O. Required for the formation of a threonylcarbamoyl group on adenosine at position 37 (t(6)A37) in tRNAs that read codons beginning with adenine. Catalyzes the conversion of L-threonine, HCO(3)(-)/CO(2) and ATP to give threonylcarbamoyl-AMP (TC-AMP) as the acyladenylate intermediate, with the release of diphosphate. This Buchnera aphidicola subsp. Acyrthosiphon pisum (strain APS) (Acyrthosiphon pisum symbiotic bacterium) protein is Threonylcarbamoyl-AMP synthase.